Consider the following 213-residue polypeptide: Dimethylamine corrinoid protein (213 aa).

The B12-binding N-terminal domain maps to 1–90 (MSKEELLQEL…LMPEGASGSK (90 aa)). One can recognise a B12-binding domain in the interval 91 to 213 (LGVIVNGTVE…AVAKAKELLA (123 aa)). Residue His-104 participates in methylcob(III)alamin binding.

This sequence belongs to the methylamine corrinoid protein family. Copurifies with MtbA.

The protein operates within one-carbon metabolism; methanogenesis from dimethylamine. In terms of biological role, acts as a methyl group carrier between MtbB1 and MtbA. Binds 1 corrinoid cofactor per protein, is subsequently demethylated by MtbA. The protein is Dimethylamine corrinoid protein of Methanosarcina barkeri.